Reading from the N-terminus, the 440-residue chain is MLITNPALLGILASLAPLALGAPNQSTQARSRKCVIPSSYTSSQGTADDSPAVAGAFAQCAENSVIIFQEGVDYNIFHPIKATNLSNVEIRVLGNLHLPQDITAVQNIVKSGQNTWFTFQGPRVDWTGADDINNGWINSYGQAWWDANPANSSSFPNRPHLMSYKTSQASIKNFRSRKPIAWNVKLHGDDITVTHAIVDAKSTGGFPFNTDGFDVEGTNISITDSVMYNGDDAIAVNTPSHNIVFARNTIGYQSHGMSIGSLGKDPTDFANITNLRFEDVTVIDALYAARFKSWSGGKGLVKNVVWKNIRVFNVTFPIFVTQSYSDQSASRSGTIDPSSSVMMEDFTWSNFSGSINTYHPGDGSCVTNPCWYNAGLPNLKHTEAIVLECNTESSCKNFRTEGIRLYPQSKDSPSVICMKATAELNPKLGFECKNGTFVPQ.

The N-terminal stretch at 1–21 (MLITNPALLGILASLAPLALG) is a signal peptide. N-linked (GlcNAc...) asparagine glycosylation is found at Asn-24, Asn-84, Asn-151, and Asn-219. PbH1 repeat units follow at residues 217–238 (GTNISITDSVMYNGDDAIAVNT) and 240–261 (SHNIVFARNTIGYQSHGMSIGS). Asp-231 serves as the catalytic Proton donor. His-255 is a catalytic residue. A glycan (N-linked (GlcNAc...) asparagine) is linked at Asn-271. Residues 272 to 293 (ITNLRFEDVTVIDALYAARFKS) form a PbH1 3 repeat. N-linked (GlcNAc...) asparagine glycans are attached at residues Asn-313 and Asn-350. A disulfide bridge connects residues Cys-389 and Cys-395. Asn-434 is a glycosylation site (N-linked (GlcNAc...) asparagine).

The protein belongs to the glycosyl hydrolase 28 family.

It localises to the secreted. The catalysed reaction is [(1-&gt;4)-alpha-D-galacturonosyl](n) + H2O = alpha-D-galacturonate + [(1-&gt;4)-alpha-D-galacturonosyl](n-1). Specific in hydrolyzing the terminal glycosidic bond of polygalacturonic acid and oligogalacturonates. The protein is Probable exopolygalacturonase C (pgxC) of Neosartorya fischeri (strain ATCC 1020 / DSM 3700 / CBS 544.65 / FGSC A1164 / JCM 1740 / NRRL 181 / WB 181) (Aspergillus fischerianus).